Reading from the N-terminus, the 747-residue chain is Meprin A subunit alpha (747 aa).

Residues 1-20 form the signal peptide; it reads MLWIQPACLLSLIFSAHIAA. A propeptide spanning residues 21–64 is cleaved from the precursor; the sequence is VSIKHLLNGSDHDTDVGEQKDIFEINLAAGLNLFQGDILLPRTR. N28 and N139 each carry an N-linked (GlcNAc...) asparagine glycan. The Peptidase M12A domain maps to 65–259; that stretch reads NAMRDPSSRW…IRLNRMYNCT (195 aa). At 65–713 the chain is on the extracellular side; sequence NAMRDPSSRW…FYAGERCQAM (649 aa). Intrachain disulfides connect C106–C258, C127–C146, and C268–C430. H154 is a binding site for Zn(2+). Residue E155 is part of the active site. Positions 158 and 164 each coordinate Zn(2+). N-linked (GlcNAc...) asparagine glycosylation is found at N221, N257, N317, N413, N439, N533, and N540. The MAM domain maps to 263-432; that stretch reads TLLDHCDFEK…ITLTETPCPA (170 aa). The MATH domain occupies 433 to 594; the sequence is GVWTIRNISQ…GDSLIIFVDF (162 aa). A disordered region spans residues 638–663; it reads ESLPSSLGQRHPSRQKRSVENTGPME. The 41-residue stretch at 671–711 folds into the EGF-like domain; the sequence is FRDPCDPNPCQNEGTCVNVKGMASCRCVSGHAFFYAGERCQ. Cystine bridges form between C675–C686, C680–C695, and C697–C710. A helical membrane pass occupies residues 714-741; that stretch reads HVHGSLLGLLIGCIAGLIFLTFVTFSTT. Topologically, residues 742–747 are cytoplasmic; it reads NGKLRQ.

As to quaternary structure, homotetramer consisting of disulfide-linked alpha subunits, homooligomer consisting of disulfide-linked alpha subunit homodimers, or heterotetramer of two alpha and two beta subunits formed by non-covalent association of two disulfide-linked heterodimers. Genetic factors determine which oligomer(s) will be formed (strain-specific). Interacts with MBL2 through its carbohydrate moiety. This interaction may inhibit its catalytic activity. Requires Zn(2+) as cofactor. In terms of processing, N-glycosylated; contains GlcNAc, galactose, mannose and a small amount of fucose. In terms of tissue distribution, kidney, intestinal brush borders and salivary ducts.

It is found in the membrane. It catalyses the reaction Hydrolysis of protein and peptide substrates preferentially on carboxyl side of hydrophobic residues.. Inhibited by metal ion chelators EDTA and 1,10-phenanthroline, bradykinin analogs, cysteine, CONA65, and several hydroxamate compounds, particularly tyrosine hydroxamate. Not inhibited by 3,4-dichloroisocourmarin, soybean trypsin inhibitor, or the cysteine proteinase inhibitors iodoacetic acid and E-64. This chain is Meprin A subunit alpha (Mep1a), found in Mus musculus (Mouse).